The chain runs to 304 residues: Recombination-associated protein RdgC (304 aa).

Belongs to the RdgC family.

It localises to the cytoplasm. It is found in the nucleoid. In terms of biological role, may be involved in recombination. This is Recombination-associated protein RdgC from Paraburkholderia phymatum (strain DSM 17167 / CIP 108236 / LMG 21445 / STM815) (Burkholderia phymatum).